We begin with the raw amino-acid sequence, 366 residues long: Chorismate synthase (366 aa).

2 residues coordinate NADP(+): R48 and R54. FMN-binding positions include 125-127 (RSS), 237-238 (NA), G277, 292-296 (KPTSS), and R318.

It belongs to the chorismate synthase family. As to quaternary structure, homotetramer. It depends on FMNH2 as a cofactor.

It catalyses the reaction 5-O-(1-carboxyvinyl)-3-phosphoshikimate = chorismate + phosphate. It participates in metabolic intermediate biosynthesis; chorismate biosynthesis; chorismate from D-erythrose 4-phosphate and phosphoenolpyruvate: step 7/7. Functionally, catalyzes the anti-1,4-elimination of the C-3 phosphate and the C-6 proR hydrogen from 5-enolpyruvylshikimate-3-phosphate (EPSP) to yield chorismate, which is the branch point compound that serves as the starting substrate for the three terminal pathways of aromatic amino acid biosynthesis. This reaction introduces a second double bond into the aromatic ring system. The chain is Chorismate synthase from Acidovorax sp. (strain JS42).